Here is an 848-residue protein sequence, read N- to C-terminus: F-BAR domain only protein 2 (848 aa).

The F-BAR domain maps to 4–250 (PYFLENFWGN…NMENTSVESL (247 aa)). Residues 87 to 114 (HMELVRKLQELIKEVQKYVDEQAKNHKK) are a coiled coil. Disordered regions lie at residues 292-316 (IPGRRKEKDTDSTESTEVEAVNASN) and 404-526 (LSPT…RAES). Phosphoserine is present on residues Ser405 and Ser417. Over residues 445 to 460 (PFGPTSTGSSSSLPQS) the composition is skewed to low complexity. In terms of domain architecture, MHD spans 580 to 848 (ALPIAVAFTE…FATGRYMADC (269 aa)).

This sequence belongs to the FCHO family. As to quaternary structure, homodimer.

It is found in the membrane. Its subcellular location is the clathrin-coated pit. Its function is as follows. May function in an early step of clathrin-mediated endocytosis. The protein is F-BAR domain only protein 2 (fcho2) of Danio rerio (Zebrafish).